Reading from the N-terminus, the 164-residue chain is NADH-quinone oxidoreductase subunit I (164 aa).

4Fe-4S ferredoxin-type domains are found at residues 56-85 and 95-124; these read RRYE…IEAE and TRYD…EGPN. [4Fe-4S] cluster-binding residues include Cys-65, Cys-68, Cys-71, Cys-75, Cys-104, Cys-107, Cys-110, and Cys-114.

Belongs to the complex I 23 kDa subunit family. NDH-1 is composed of 14 different subunits. Subunits NuoA, H, J, K, L, M, N constitute the membrane sector of the complex. [4Fe-4S] cluster serves as cofactor.

The protein resides in the cell inner membrane. It catalyses the reaction a quinone + NADH + 5 H(+)(in) = a quinol + NAD(+) + 4 H(+)(out). In terms of biological role, NDH-1 shuttles electrons from NADH, via FMN and iron-sulfur (Fe-S) centers, to quinones in the respiratory chain. The immediate electron acceptor for the enzyme in this species is believed to be ubiquinone. Couples the redox reaction to proton translocation (for every two electrons transferred, four hydrogen ions are translocated across the cytoplasmic membrane), and thus conserves the redox energy in a proton gradient. This chain is NADH-quinone oxidoreductase subunit I, found in Anaplasma phagocytophilum (strain HZ).